The chain runs to 477 residues: 3-isopropylmalate dehydratase large subunit (477 aa).

C352, C413, and C416 together coordinate [4Fe-4S] cluster.

Belongs to the aconitase/IPM isomerase family. LeuC type 1 subfamily. Heterodimer of LeuC and LeuD. [4Fe-4S] cluster serves as cofactor.

The enzyme catalyses (2R,3S)-3-isopropylmalate = (2S)-2-isopropylmalate. The protein operates within amino-acid biosynthesis; L-leucine biosynthesis; L-leucine from 3-methyl-2-oxobutanoate: step 2/4. Functionally, catalyzes the isomerization between 2-isopropylmalate and 3-isopropylmalate, via the formation of 2-isopropylmaleate. This chain is 3-isopropylmalate dehydratase large subunit, found in Pseudomonas putida (strain W619).